Reading from the N-terminus, the 178-residue chain is Interleukin-10 (178 aa).

The first 18 residues, 1-18 (MPSSALLYCLILLAGVRP), serve as a signal peptide directing secretion. Disulfide bonds link Cys30-Cys126 and Cys80-Cys132. N-linked (GlcNAc...) asparagine glycosylation occurs at Asn134.

The protein belongs to the IL-10 family. In terms of assembly, homodimer. Interacts with IL10RA and IL10RB.

The protein resides in the secreted. Major immune regulatory cytokine that acts on many cells of the immune system where it has profound anti-inflammatory functions, limiting excessive tissue disruption caused by inflammation. Mechanistically, IL10 binds to its heterotetrameric receptor comprising IL10RA and IL10RB leading to JAK1 and STAT2-mediated phosphorylation of STAT3. In turn, STAT3 translocates to the nucleus where it drives expression of anti-inflammatory mediators. Targets antigen-presenting cells (APCs) such as macrophages and monocytes and inhibits their release of pro-inflammatory cytokines including granulocyte-macrophage colony-stimulating factor /GM-CSF, granulocyte colony-stimulating factor/G-CSF, IL-1 alpha, IL-1 beta, IL-6, IL-8 and TNF-alpha. Also interferes with antigen presentation by reducing the expression of MHC-class II and co-stimulatory molecules, thereby inhibiting their ability to induce T cell activation. In addition, controls the inflammatory response of macrophages by reprogramming essential metabolic pathways including mTOR signaling. In Meriones unguiculatus (Mongolian jird), this protein is Interleukin-10 (IL10).